A 256-amino-acid polypeptide reads, in one-letter code: Cysteine-rich repeat secretory protein 42 (256 aa).

The signal sequence occupies residues 1–26; that stretch reads MSSVFGSVHILAMIAIQLLLTHSVSS. 2 Gnk2-homologous domains span residues 33–136 and 142–253; these read YLHH…SVAS and YEND…LYPF.

This sequence belongs to the cysteine-rich repeat secretory protein family.

Its subcellular location is the secreted. The protein is Cysteine-rich repeat secretory protein 42 (CRRSP42) of Arabidopsis thaliana (Mouse-ear cress).